We begin with the raw amino-acid sequence, 215 residues long: Ribonuclease T (215 aa).

In terms of domain architecture, Exonuclease spans 20–194 (VVIDVETAGF…YDTERTAVLF (175 aa)). Positions 23, 25, 181, and 186 each coordinate Mg(2+). Catalysis depends on His-181, which acts as the Proton donor/acceptor.

It belongs to the RNase T family. As to quaternary structure, homodimer. Mg(2+) is required as a cofactor.

Functionally, trims short 3' overhangs of a variety of RNA species, leaving a one or two nucleotide 3' overhang. Responsible for the end-turnover of tRNA: specifically removes the terminal AMP residue from uncharged tRNA (tRNA-C-C-A). Also appears to be involved in tRNA biosynthesis. The sequence is that of Ribonuclease T from Salmonella paratyphi A (strain ATCC 9150 / SARB42).